The chain runs to 188 residues: Transmembrane protein 160 (188 aa).

The transit peptide at 1-96 (MGGGWWWARV…ISFMQSDMGR (96 aa)) directs the protein to the mitochondrion. A disordered region spans residues 21-53 (SLQPPQRPRSGGARGSFAPGHGPRAGASPPPVS). The residue at position 48 (Ser-48) is a Phosphoserine. A run of 2 helical transmembrane segments spans residues 102 to 122 (FFLL…VGLA) and 135 to 155 (AAAG…AVGL). The interval 168–188 (PEDDGAASTEGPDEAGRPPPE) is disordered.

This sequence belongs to the TMEM160 family. As to expression, expressed in peripheral sensory neurons of dorsal root ganglia (DRG).

Its subcellular location is the mitochondrion inner membrane. The chain is Transmembrane protein 160 from Mus musculus (Mouse).